The primary structure comprises 318 residues: Methionyl-tRNA formyltransferase (318 aa).

Residue 112–115 participates in (6S)-5,6,7,8-tetrahydrofolate binding; that stretch reads SILP.

Belongs to the Fmt family.

The enzyme catalyses L-methionyl-tRNA(fMet) + (6R)-10-formyltetrahydrofolate = N-formyl-L-methionyl-tRNA(fMet) + (6S)-5,6,7,8-tetrahydrofolate + H(+). Its function is as follows. Attaches a formyl group to the free amino group of methionyl-tRNA(fMet). The formyl group appears to play a dual role in the initiator identity of N-formylmethionyl-tRNA by promoting its recognition by IF2 and preventing the misappropriation of this tRNA by the elongation apparatus. The polypeptide is Methionyl-tRNA formyltransferase (Haemophilus influenzae (strain PittGG)).